A 46-amino-acid chain; its full sequence is RDCRSQSKTFVGLCVSDTNCASVCLTEHFPGGKCDGYRRCFCTKDC.

4 disulfide bridges follow: Cys-3-Cys-46, Cys-14-Cys-34, Cys-20-Cys-40, and Cys-24-Cys-42.

Plant defense peptide. The polypeptide is Defensin Tk-AMP-D6 (Triticum kiharae (Wheat)).